Reading from the N-terminus, the 107-residue chain is Large ribosomal subunit protein uL24 (107 aa).

It belongs to the universal ribosomal protein uL24 family. In terms of assembly, part of the 50S ribosomal subunit.

Its function is as follows. One of two assembly initiator proteins, it binds directly to the 5'-end of the 23S rRNA, where it nucleates assembly of the 50S subunit. In terms of biological role, one of the proteins that surrounds the polypeptide exit tunnel on the outside of the subunit. The polypeptide is Large ribosomal subunit protein uL24 (Caldanaerobacter subterraneus subsp. tengcongensis (strain DSM 15242 / JCM 11007 / NBRC 100824 / MB4) (Thermoanaerobacter tengcongensis)).